The chain runs to 150 residues: Ribosome maturation factor RimP (150 aa).

The protein belongs to the RimP family.

It is found in the cytoplasm. Required for maturation of 30S ribosomal subunits. In Francisella tularensis subsp. mediasiatica (strain FSC147), this protein is Ribosome maturation factor RimP.